The primary structure comprises 441 residues: 2-oxoisovalerate dehydrogenase subunit alpha, mitochondrial (441 aa).

Residues Met1–Glu17 constitute a mitochondrion transit peptide. Gln145 to Arg147 is a thiamine diphosphate binding site. Residues Ser194, Thr199, and Gln200 each coordinate K(+).

The protein belongs to the BCKDHA family. As to quaternary structure, heterotetramer of alpha and beta chains. Requires thiamine diphosphate as cofactor.

The protein localises to the mitochondrion matrix. It carries out the reaction N(6)-[(R)-lipoyl]-L-lysyl-[protein] + 3-methyl-2-oxobutanoate + H(+) = N(6)-[(R)-S(8)-2-methylpropanoyldihydrolipoyl]-L-lysyl-[protein] + CO2. The branched-chain alpha-keto dehydrogenase complex catalyzes the overall conversion of alpha-keto acids to acyl-CoA and CO(2). It contains multiple copies of three enzymatic components: branched-chain alpha-keto acid decarboxylase (E1), lipoamide acyltransferase (E2) and lipoamide dehydrogenase (E3). In Dictyostelium discoideum (Social amoeba), this protein is 2-oxoisovalerate dehydrogenase subunit alpha, mitochondrial (bkdA).